The following is an 88-amino-acid chain: uncharacterized protein (88 aa).

Positions 1–25 are cleaved as a signal peptide; the sequence is MRAAFWVGCAALLLSACSSEPVQQA.

This is an uncharacterized protein from Escherichia coli O6:H1 (strain CFT073 / ATCC 700928 / UPEC).